The following is an 872-amino-acid chain: Alanine--tRNA ligase (872 aa).

Residues H563, H567, C665, and H669 each contribute to the Zn(2+) site.

Belongs to the class-II aminoacyl-tRNA synthetase family. Zn(2+) serves as cofactor.

The protein resides in the cytoplasm. The catalysed reaction is tRNA(Ala) + L-alanine + ATP = L-alanyl-tRNA(Ala) + AMP + diphosphate. Catalyzes the attachment of alanine to tRNA(Ala) in a two-step reaction: alanine is first activated by ATP to form Ala-AMP and then transferred to the acceptor end of tRNA(Ala). Also edits incorrectly charged Ser-tRNA(Ala) and Gly-tRNA(Ala) via its editing domain. The protein is Alanine--tRNA ligase of Bacteroides fragilis (strain YCH46).